The primary structure comprises 120 residues: Flagellar protein FliT (120 aa).

Positions 1-50 (MNDSSLSLKKWHALSALSNTMLSLAQSGKWDELIEQEVAYVSLVEKISIT) are required for homodimerization. Residues 59–97 (IQDQAMVMLNNVLQNEMTLKTLLQERMDELHGLMAQTGK) form a fliD binding region.

Belongs to the FliT family. As to quaternary structure, homodimer. Interacts with FliD and FlhC.

It localises to the cytoplasm. It is found in the cytosol. Functionally, dual-function protein that regulates the transcription of class 2 flagellar operons and that also acts as an export chaperone for the filament-capping protein FliD. As a transcriptional regulator, acts as an anti-FlhDC factor; it directly binds FlhC, thus inhibiting the binding of the FlhC/FlhD complex to class 2 promoters, resulting in decreased expression of class 2 flagellar operons. As a chaperone, effects FliD transition to the membrane by preventing its premature polymerization, and by directing it to the export apparatus. The sequence is that of Flagellar protein FliT from Enterobacter sp. (strain 638).